The following is a 313-amino-acid chain: Protein phosphatase PTC7 homolog fig (313 aa).

One can recognise a PPM-type phosphatase domain in the interval 47–307 (KEPLTDLQLR…DDITVILASL (261 aa)). 3 residues coordinate Mn(2+): Asp83, Gly84, and Asp229.

This sequence belongs to the PP2C family. The cofactor is Mg(2+). Requires Mn(2+) as cofactor.

It catalyses the reaction O-phospho-L-seryl-[protein] + H2O = L-seryl-[protein] + phosphate. It carries out the reaction O-phospho-L-threonyl-[protein] + H2O = L-threonyl-[protein] + phosphate. This is Protein phosphatase PTC7 homolog fig from Drosophila virilis (Fruit fly).